Consider the following 83-residue polypeptide: MAITKKILLPFVLTILFVISSVHCSDDTQGFGIKQEYKQCYTPDPCRKGGNDECERFCVAKSGLLYGKCINDGSKDVCCCLTK.

The signal sequence occupies residues 1–24; that stretch reads MAITKKILLPFVLTILFVISSVHC. Intrachain disulfides connect cysteine 40–cysteine 80, cysteine 46–cysteine 69, cysteine 54–cysteine 78, and cysteine 58–cysteine 79.

This sequence belongs to the DEFL family.

Its subcellular location is the secreted. The chain is Putative defensin-like protein 111 (LCR50) from Arabidopsis thaliana (Mouse-ear cress).